The chain runs to 278 residues: Potassium/proton antiporter CemA (278 aa).

The next 4 helical transmembrane spans lie at 61–81 (IFLLLISPVLVNQASKFFDFG), 155–175 (AVKNILSDILSIAVFILLMIT), 203–223 (IILFTDMFVGFHSPHGWEVII), and 238–258 (FIFLFISTFPVILDTIFKYWI).

It belongs to the CemA family.

It is found in the plastid. It localises to the chloroplast inner membrane. The catalysed reaction is K(+)(in) + H(+)(out) = K(+)(out) + H(+)(in). Its function is as follows. Contributes to K(+)/H(+) antiport activity by supporting proton efflux to control proton extrusion and homeostasis in chloroplasts in a light-dependent manner to modulate photosynthesis. Prevents excessive induction of non-photochemical quenching (NPQ) under continuous-light conditions. Indirectly promotes efficient inorganic carbon uptake into chloroplasts. In Porphyra purpurea (Red seaweed), this protein is Potassium/proton antiporter CemA.